The primary structure comprises 119 residues: Small ribosomal subunit protein bS6 (119 aa).

This sequence belongs to the bacterial ribosomal protein bS6 family.

Its function is as follows. Binds together with bS18 to 16S ribosomal RNA. This is Small ribosomal subunit protein bS6 from Thermosipho africanus (strain TCF52B).